An 87-amino-acid polypeptide reads, in one-letter code: MQVLVRDNNVDQALKALKKKMQREGIFREMKLRGHYEKPSEKKAREKAEAVRRARKLARKKLQREGLLPSKPKPAFGADRRPSAAAR.

Residues 35-52 (HYEKPSEKKAREKAEAVR) are compositionally biased toward basic and acidic residues. A disordered region spans residues 35-87 (HYEKPSEKKAREKAEAVRRARKLARKKLQREGLLPSKPKPAFGADRRPSAAAR). Residues 53–62 (RARKLARKKL) show a composition bias toward basic residues. The span at 78–87 (ADRRPSAAAR) shows a compositional bias: basic and acidic residues.

This chain is Small ribosomal subunit protein bS21, found in Rhodopseudomonas palustris (strain ATCC BAA-98 / CGA009).